Here is a 231-residue protein sequence, read N- to C-terminus: MTTPHSPKTIDELMSRANDMAGLTLGQLADSHGFITPANLKRDKGWVGQLIEHELGALAGSRPEPDFLHLGIELKTIPVDKNGKPIETTYVTVAPLIDIQGLTWETSVVCHKLQTVLWIPIQGDRDIPVSQRQIGSPILWRPNEEELALLKQDWEEIMEFIALGQVKQLTARHGEVLQLRPKGANSRSVTQSIGPNGSTQMTNPRGFYLKIPFTQSILSRAFGIYTQATSR.

Belongs to the MutH family.

Its subcellular location is the cytoplasm. In terms of biological role, sequence-specific endonuclease that cleaves unmethylated GATC sequences. It is involved in DNA mismatch repair. The chain is DNA mismatch repair protein MutH from Shewanella woodyi (strain ATCC 51908 / MS32).